The following is a 596-amino-acid chain: Merlin (596 aa).

Residue Ser13 is modified to Phosphoserine. The 290-residue stretch at Phe22–Arg311 folds into the FERM domain. Ser518 carries the post-translational modification Phosphoserine; by PAK. The segment at Val560–Lys580 is disordered.

Interacts with NHERF1, HGS and AGAP2. Interacts with SGSM3. Interacts (via FERM domain) with MPP1. Interacts with LAYN. Interacts with WWC1. Interacts with the CUL4A-RBX1-DDB1-VprBP/DCAF1 E3 ubiquitin-protein ligase complex. The unphosphorylated form interacts (via FERM domain) with VPRBP/DCAF1. Interacts (via FERM domain) with NOP53; the interaction is direct. Interacts with SCHIP1; the interaction is direct. In terms of processing, phosphorylation of Ser-518 inhibits nuclear localization by disrupting the intramolecular association of the FERM domain with the C-terminal tail. The dephosphorylation of Ser-518 favors the interaction with NOP53. Post-translationally, ubiquitinated by the CUL4A-RBX1-DDB1-DCAF1/VprBP E3 ubiquitin-protein ligase complex for ubiquitination and subsequent proteasome-dependent degradation.

The protein resides in the cell membrane. Its subcellular location is the cell projection. It localises to the cytoplasm. The protein localises to the cytoskeleton. It is found in the nucleus. Functionally, probable regulator of the Hippo/SWH (Sav/Wts/Hpo) signaling pathway, a signaling pathway that plays a pivotal role in tumor suppression by restricting proliferation and promoting apoptosis. Along with WWC1 can synergistically induce the phosphorylation of LATS1 and LATS2 and can probably function in the regulation of the Hippo/SWH (Sav/Wts/Hpo) signaling pathway. May act as a membrane stabilizing protein. May inhibit PI3 kinase by binding to AGAP2 and impairing its stimulating activity. Suppresses cell proliferation and tumorigenesis by inhibiting the CUL4A-RBX1-DDB1-VprBP/DCAF1 E3 ubiquitin-protein ligase complex. Plays a role in lens development and is required for complete fiber cell terminal differentiation, maintenance of cell polarity and separation of the lens vesicle from the corneal epithelium. This is Merlin (Nf2) from Mus musculus (Mouse).